We begin with the raw amino-acid sequence, 294 residues long: Cytidine deaminase (294 aa).

CMP/dCMP-type deaminase domains follow at residues 48-168 (DEDA…FGPK) and 186-294 (LTGD…VLLG). Substrate is bound at residue 89–91 (NME). Residue His-102 coordinates Zn(2+). The active-site Proton donor is the Glu-104. Residues Cys-129 and Cys-132 each coordinate Zn(2+).

Belongs to the cytidine and deoxycytidylate deaminase family. In terms of assembly, homodimer. Zn(2+) is required as a cofactor.

It carries out the reaction cytidine + H2O + H(+) = uridine + NH4(+). The enzyme catalyses 2'-deoxycytidine + H2O + H(+) = 2'-deoxyuridine + NH4(+). Functionally, this enzyme scavenges exogenous and endogenous cytidine and 2'-deoxycytidine for UMP synthesis. In Escherichia fergusonii (strain ATCC 35469 / DSM 13698 / CCUG 18766 / IAM 14443 / JCM 21226 / LMG 7866 / NBRC 102419 / NCTC 12128 / CDC 0568-73), this protein is Cytidine deaminase.